The primary structure comprises 274 residues: uncharacterized protein (274 aa).

Positions 99 to 206 (NNVISGYVDL…ESEMEIFIQK (108 aa)) form a coiled coil.

This is an uncharacterized protein from Dictyostelium discoideum (Social amoeba).